A 284-amino-acid chain; its full sequence is RNase adapter protein RapZ (284 aa).

8–15 (GRSGSGKS) contributes to the ATP binding site. 56–59 (DVRN) contributes to the GTP binding site. The tract at residues 266 to 284 (RSRGKNVQSRHRTLEKRKP) is RNA-binding.

Belongs to the RapZ-like family. RapZ subfamily. As to quaternary structure, homotrimer.

Functionally, modulates the synthesis of GlmS, by affecting the processing and stability of the regulatory small RNA GlmZ. When glucosamine-6-phosphate (GlcN6P) concentrations are high in the cell, RapZ binds GlmZ and targets it to cleavage by RNase E. Consequently, GlmZ is inactivated and unable to activate GlmS synthesis. Under low GlcN6P concentrations, RapZ is sequestered and inactivated by an other regulatory small RNA, GlmY, preventing GlmZ degradation and leading to synthesis of GlmS. This is RNase adapter protein RapZ from Shigella dysenteriae serotype 1 (strain Sd197).